We begin with the raw amino-acid sequence, 465 residues long: Alpha-2A adrenergic receptor (465 aa).

Residues 1–48 (MFRQEQPLAEGSFAPMGSLQPDAGNSSWNGTEAPGGGTRATPYSLQVT) are Extracellular-facing. Asn-25 and Asn-29 each carry an N-linked (GlcNAc...) asparagine glycan. Residues 49 to 74 (LTLVCLAGLLMLFTVFGNVLVIIAVF) traverse the membrane as a helical segment. The Cytoplasmic portion of the chain corresponds to 75–85 (TSRALKAPQNL). A helical transmembrane segment spans residues 86–111 (FLVSLASADILVATLVIPFSLANEVM). The Extracellular portion of the chain corresponds to 112–121 (GYWYFGKVWC). The cysteines at positions 121 and 203 are disulfide-linked. The helical transmembrane segment at 122–144 (EIYLALDVLFCTSSIVHLCAISL) threads the bilayer. The Cytoplasmic portion of the chain corresponds to 145–164 (DRYWSITQAIEYNLKRTPRR). The helical transmembrane segment at 165 to 188 (IKAIIVTVWVISAVISFPPLISIE) threads the bilayer. Residues 189–207 (KKGAGGGQQPAEPSCKIND) lie on the Extracellular side of the membrane. A helical membrane pass occupies residues 208–232 (QKWYVISSSIGSFFAPCLIMILVYV). Over 233–389 (RIYQIAKRRT…RQNREKRFTF (157 aa)) the chain is Cytoplasmic. The interval 242-377 (TRVPPSRRGP…RAGGAKASRW (136 aa)) is disordered. The span at 313–330 (SSEHAERPQGPGKPERGP) shows a compositional bias: basic and acidic residues. Residue Ser-346 is modified to Phosphoserine. The segment covering 353-364 (GAAGPGASGSGQ) has biased composition (gly residues). The residue at position 368 (Arg-368) is an Omega-N-methylarginine. Residues 390 to 414 (VLAVVIGVFVVCWFPFFFTYTLIAV) form a helical membrane-spanning segment. Residues 415 to 424 (GCPVPYQLFN) lie on the Extracellular side of the membrane. Residues 425 to 445 (FFFWFGYCNSSLNPVIYTIFN) form a helical membrane-spanning segment. Over 446–465 (HDFRRAFKKILCRGDRKRIV) the chain is Cytoplasmic. Residue Cys-457 is the site of S-palmitoyl cysteine attachment.

It belongs to the G-protein coupled receptor 1 family. Adrenergic receptor subfamily. ADRA2A sub-subfamily. Expressed in brain.

Its subcellular location is the cell membrane. Functionally, alpha-2 adrenergic receptors mediate the catecholamine-induced inhibition of adenylate cyclase through the action of G proteins. This is Alpha-2A adrenergic receptor from Rattus norvegicus (Rat).